The primary structure comprises 152 residues: Transcriptional regulator MraZ (152 aa).

SpoVT-AbrB domains lie at 5–52 (ASAI…PADE) and 81–124 (AHEI…DEAQ).

It belongs to the MraZ family. Forms oligomers.

Its subcellular location is the cytoplasm. The protein resides in the nucleoid. This Shewanella amazonensis (strain ATCC BAA-1098 / SB2B) protein is Transcriptional regulator MraZ.